A 132-amino-acid polypeptide reads, in one-letter code: Large ribosomal subunit protein uL14 (132 aa).

Belongs to the universal ribosomal protein uL14 family. Part of the 50S ribosomal subunit. Forms a cluster with proteins L3 and L24e, part of which may contact the 16S rRNA in 2 intersubunit bridges.

Binds to 23S rRNA. Forms part of two intersubunit bridges in the 70S ribosome. In Methanococcus maripaludis (strain DSM 14266 / JCM 13030 / NBRC 101832 / S2 / LL), this protein is Large ribosomal subunit protein uL14.